Consider the following 584-residue polypeptide: Putative sel1-like repeat-containing protein L18 (584 aa).

Sel1-like repeat units follow at residues 132 to 167, 168 to 203, 204 to 237, 238 to 273, 274 to 309, and 316 to 351; these read SMAQ…DQNN, KYGL…CQNF, SKAQ…NQNH, SSAQ…SQGL, NSAK…YDDG, and EVAM…NTKN.

In Acanthamoeba polyphaga (Amoeba), this protein is Putative sel1-like repeat-containing protein L18.